The following is a 91-amino-acid chain: Alpha-elapitoxin-Oh2b (91 aa).

The first 21 residues, 1–21 (MKTLLLTLVVMTIVCLDLGYT), serve as a signal peptide directing secretion. Cystine bridges form between C24–C41, C34–C62, C47–C51, C66–C77, and C78–C83.

Belongs to the three-finger toxin family. Long-chain subfamily. Type II alpha-neurotoxin sub-subfamily. Monomer. In terms of tissue distribution, expressed by the venom gland.

Its subcellular location is the secreted. Functionally, binds with high affinity to muscular (alpha-1/CHRNA1) and neuronal (alpha-7/CHRNA7) nicotinic acetylcholine receptor (nAChR) and inhibits acetylcholine from binding to the receptor, thereby impairing neuromuscular and neuronal transmission. Recombinant LNTX1 leads to a functional block of the muscle-type acetylcholine receptors. Has a cytotoxic activity. This neurotoxin is lethal. In Ophiophagus hannah (King cobra), this protein is Alpha-elapitoxin-Oh2b.